The primary structure comprises 1692 residues: Tyrosine-protein phosphatase non-receptor type 23 (1692 aa).

One can recognise a BRO1 domain in the interval 8 to 394 (PMIWLDLKEA…AKIEDKNEVL (387 aa)). TPR repeat units lie at residues 250-283 (AVAH…LNEA) and 374-407 (EEKA…DPET). Positions 552-639 (KAVLQNLKRI…RALTEANVQY (88 aa)) form a coiled coil. Disordered regions lie at residues 711–788 (DREL…PATH), 884–923 (DSVQ…PQPQ), and 944–1199 (TYSI…LLQP). The residue at position 744 (Thr744) is a Phosphothreonine. The interval 773 to 1186 (HFSPGPFPSS…SSSPESQHGG (414 aa)) is his. Residues 774–785 (FSPGPFPSSTGP) show a composition bias toward low complexity. Over residues 884–894 (DSVQAPISSHT) the composition is skewed to polar residues. A compositionally biased stretch (pro residues) spans 897–923 (RPNPTPALPQPCFPVPQPVPQSVPQPQ). Arg974 carries the omega-N-methylarginine modification. Repeat copies occupy residues 977-978 (PQ), 979-980 (AQ), 981-982 (AQ), 983-984 (PQ), 985-986 (PQ), 987-988 (PQ), 989-990 (PQ), 991-992 (PQ), 993-994 (PQ), 995-996 (PQ), 997-998 (PQ), 999-1000 (PQ), 1001-1002 (PQ), 1003-1004 (PQ), 1005-1006 (SQ), 1007-1008 (SQ), 1009-1010 (PQ), 1011-1012 (PQ), 1013-1014 (PQ), 1015-1016 (PQ), and 1017-1018 (PQ). Positions 977-1018 (PQAQAQPQPQPQPQPQPQPQPQPQPQPQSQSQPQPQPQPQPQ) are 21 X 2 AA approximate tandem repeats of P-Q. Residues 984 to 1002 (QPQPQPQPQPQPQPQPQPQ) are compositionally biased toward pro residues. Composition is skewed to pro residues over residues 1093-1102 (FPSPGPPHPH) and 1127-1165 (GPPP…PPPC). A phosphoserine mark is found at Ser1178 and Ser1179. Thr1187 is modified (phosphothreonine). The region spanning 1248 to 1508 (DAIWRELQEA…KFCHEALVRH (261 aa)) is the Tyrosine-protein phosphatase domain. The active-site Phosphocysteine intermediate is Cys1448. The disordered stretch occupies residues 1574–1638 (ASLPGLVEPP…PSSSLELLAS (65 aa)). Over residues 1598–1612 (SSSPPPLSSPLPEAP) the composition is skewed to pro residues. Residues 1620-1638 (VPEAPSLGPPSSSLELLAS) show a composition bias toward low complexity. Arg1671 carries the post-translational modification Omega-N-methylarginine.

It belongs to the protein-tyrosine phosphatase family. Non-receptor class subfamily. Interacts with GRAP2 and GRB2. Interacts with UBAP1 and CHMP4B.

Its subcellular location is the nucleus. The protein resides in the cytoplasm. It is found in the cytoplasmic vesicle. It localises to the endosome. The protein localises to the cytoskeleton. Its subcellular location is the cilium basal body. It carries out the reaction O-phospho-L-tyrosyl-[protein] + H2O = L-tyrosyl-[protein] + phosphate. Functionally, plays a role in sorting of endocytic ubiquitinated cargos into multivesicular bodies (MVBs) via its interaction with the ESCRT-I complex (endosomal sorting complex required for transport I), and possibly also other ESCRT complexes. May act as a negative regulator of Ras-mediated mitogenic activity. Plays a role in ciliogenesis. The chain is Tyrosine-protein phosphatase non-receptor type 23 (Ptpn23) from Mus musculus (Mouse).